Reading from the N-terminus, the 415-residue chain is S-inosyl-L-homocysteine hydrolase (415 aa).

Substrate-binding residues include D123 and E148. Residue 149-151 (TTT) participates in NAD(+) binding. Positions 178 and 182 each coordinate substrate. NAD(+)-binding positions include N183, 212-217 (GYGWCG), E235, 291-293 (AGH), and N337.

Belongs to the adenosylhomocysteinase family. It depends on NAD(+) as a cofactor.

The protein resides in the cytoplasm. It carries out the reaction S-inosyl-L-homocysteine + H2O = L-homocysteine + inosine. Its pathway is amino-acid biosynthesis; S-adenosyl-L-methionine biosynthesis. Functionally, catalyzes the hydrolysis of S-inosyl-L-homocysteine (SIH) to L-homocysteine (Hcy) and inosine. Likely functions in a S-adenosyl-L-methionine (SAM) recycling pathway from S-adenosyl-L-homocysteine (SAH) produced from SAM-dependent methylation reactions. Can also catalyze the reverse reaction in vitro, i.e. the synthesis of SIH from Hcy and inosine. This Methanococcus maripaludis (strain DSM 14266 / JCM 13030 / NBRC 101832 / S2 / LL) protein is S-inosyl-L-homocysteine hydrolase.